The chain runs to 504 residues: Argininosuccinate lyase 2 (504 aa).

This sequence belongs to the lyase 1 family. Argininosuccinate lyase subfamily.

The protein localises to the cytoplasm. The enzyme catalyses 2-(N(omega)-L-arginino)succinate = fumarate + L-arginine. It functions in the pathway amino-acid biosynthesis; L-arginine biosynthesis; L-arginine from L-ornithine and carbamoyl phosphate: step 3/3. The polypeptide is Argininosuccinate lyase 2 (Agrobacterium fabrum (strain C58 / ATCC 33970) (Agrobacterium tumefaciens (strain C58))).